A 388-amino-acid chain; its full sequence is S-adenosylmethionine synthase (388 aa).

Histidine 16 is a binding site for ATP. Aspartate 18 is a binding site for Mg(2+). Glutamate 44 is a binding site for K(+). L-methionine is bound by residues glutamate 57 and glutamine 100. Positions 100–110 (QSPDIAQGVDK) are flexible loop. Residues 167-169 (DAK), 233-234 (RF), aspartate 242, 248-249 (RK), alanine 265, and lysine 269 contribute to the ATP site. Residue aspartate 242 participates in L-methionine binding. Lysine 273 serves as a coordination point for L-methionine.

The protein belongs to the AdoMet synthase family. As to quaternary structure, homotetramer; dimer of dimers. It depends on Mg(2+) as a cofactor. The cofactor is K(+).

The protein resides in the cytoplasm. It catalyses the reaction L-methionine + ATP + H2O = S-adenosyl-L-methionine + phosphate + diphosphate. The protein operates within amino-acid biosynthesis; S-adenosyl-L-methionine biosynthesis; S-adenosyl-L-methionine from L-methionine: step 1/1. Functionally, catalyzes the formation of S-adenosylmethionine (AdoMet) from methionine and ATP. The overall synthetic reaction is composed of two sequential steps, AdoMet formation and the subsequent tripolyphosphate hydrolysis which occurs prior to release of AdoMet from the enzyme. The chain is S-adenosylmethionine synthase from Polynucleobacter necessarius subsp. necessarius (strain STIR1).